Consider the following 237-residue polypeptide: Phosphoribosylaminoimidazole-succinocarboxamide synthase (237 aa).

The protein belongs to the SAICAR synthetase family.

The enzyme catalyses 5-amino-1-(5-phospho-D-ribosyl)imidazole-4-carboxylate + L-aspartate + ATP = (2S)-2-[5-amino-1-(5-phospho-beta-D-ribosyl)imidazole-4-carboxamido]succinate + ADP + phosphate + 2 H(+). It participates in purine metabolism; IMP biosynthesis via de novo pathway; 5-amino-1-(5-phospho-D-ribosyl)imidazole-4-carboxamide from 5-amino-1-(5-phospho-D-ribosyl)imidazole-4-carboxylate: step 1/2. The chain is Phosphoribosylaminoimidazole-succinocarboxamide synthase from Yersinia enterocolitica serotype O:8 / biotype 1B (strain NCTC 13174 / 8081).